Here is a 465-residue protein sequence, read N- to C-terminus: Lipase 10 (465 aa).

An N-terminal signal peptide occupies residues 1–16; sequence MKTLLIFLAFLSSIFA. A disulfide bridge links C112 with C285. S196 serves as the catalytic Charge relay system. N-linked (GlcNAc...) asparagine glycosylation is found at N231 and N319. Catalysis depends on charge relay system residues D348 and H381. Cysteines 364 and 409 form a disulfide.

It belongs to the AB hydrolase superfamily. Lipase family. Class Lip subfamily.

The protein resides in the secreted. The enzyme catalyses a triacylglycerol + H2O = a diacylglycerol + a fatty acid + H(+). Its function is as follows. Secreted lipase that is able to hydrolyze both the neutral triacylglycerols and the monopalmitate ester Tween 40, allowing the use of hydrolyzed products as carbon sources. Has broad lipolytic activity, which may be important for colonization and subsequent infection, therefore contributing to the persistence and virulence in human tissue. This Candida albicans (strain SC5314 / ATCC MYA-2876) (Yeast) protein is Lipase 10.